Here is a 468-residue protein sequence, read N- to C-terminus: Ribulose bisphosphate carboxylase large chain (468 aa).

N6,N6,N6-trimethyllysine is present on lysine 5. Substrate is bound by residues asparagine 114 and threonine 164. The active-site Proton acceptor is lysine 166. Residue lysine 168 coordinates substrate. Residues lysine 192, aspartate 194, and glutamate 195 each coordinate Mg(2+). Lysine 192 bears the N6-carboxylysine mark. The active-site Proton acceptor is histidine 285. The substrate site is built by arginine 286, histidine 318, and serine 370.

Belongs to the RuBisCO large chain family. Type I subfamily. As to quaternary structure, heterohexadecamer of 8 large chains and 8 small chains; disulfide-linked. The disulfide link is formed within the large subunit homodimers. Requires Mg(2+) as cofactor. Post-translationally, the disulfide bond which can form in the large chain dimeric partners within the hexadecamer appears to be associated with oxidative stress and protein turnover.

It is found in the plastid. Its subcellular location is the chloroplast. The catalysed reaction is 2 (2R)-3-phosphoglycerate + 2 H(+) = D-ribulose 1,5-bisphosphate + CO2 + H2O. The enzyme catalyses D-ribulose 1,5-bisphosphate + O2 = 2-phosphoglycolate + (2R)-3-phosphoglycerate + 2 H(+). In terms of biological role, ruBisCO catalyzes two reactions: the carboxylation of D-ribulose 1,5-bisphosphate, the primary event in carbon dioxide fixation, as well as the oxidative fragmentation of the pentose substrate in the photorespiration process. Both reactions occur simultaneously and in competition at the same active site. This chain is Ribulose bisphosphate carboxylase large chain, found in Solandra grandiflora (Chalice vine).